Consider the following 536-residue polypeptide: Phosphoenolpyruvate carboxykinase (ATP) (536 aa).

Substrate contacts are provided by R61, Y195, and K201. ATP is bound by residues K201, H220, and 236–244 (GLSGTGKTT). Mn(2+) contacts are provided by K201 and H220. D257 serves as a coordination point for Mn(2+). Residues E285, R323, and T448 each coordinate ATP. Residue R323 coordinates substrate.

Belongs to the phosphoenolpyruvate carboxykinase (ATP) family. Mn(2+) is required as a cofactor.

Its subcellular location is the cytoplasm. It catalyses the reaction oxaloacetate + ATP = phosphoenolpyruvate + ADP + CO2. It participates in carbohydrate biosynthesis; gluconeogenesis. Involved in the gluconeogenesis. Catalyzes the conversion of oxaloacetate (OAA) to phosphoenolpyruvate (PEP) through direct phosphoryl transfer between the nucleoside triphosphate and OAA. This Methylobacterium sp. (strain 4-46) protein is Phosphoenolpyruvate carboxykinase (ATP).